Consider the following 474-residue polypeptide: GTPase Der (474 aa).

EngA-type G domains lie at 2–166 (LRIA…NVPE) and 212–385 (LKIA…TTVS). GTP-binding positions include 8 to 15 (GRPNVGKS), 55 to 59 (DTGGV), 118 to 121 (NKAD), 218 to 225 (GRPNVGKS), 265 to 269 (DTAGL), and 330 to 333 (NKWD). A KH-like domain is found at 386–470 (SKVPTPVVNK…PFDLEFKEKT (85 aa)).

This sequence belongs to the TRAFAC class TrmE-Era-EngA-EngB-Septin-like GTPase superfamily. EngA (Der) GTPase family. As to quaternary structure, associates with the 50S ribosomal subunit.

GTPase that plays an essential role in the late steps of ribosome biogenesis. This chain is GTPase Der, found in Chlamydia abortus (strain DSM 27085 / S26/3) (Chlamydophila abortus).